A 474-amino-acid polypeptide reads, in one-letter code: Tubulin gamma-1 chain (474 aa).

142–148 (AGGTGSG) serves as a coordination point for GTP.

It belongs to the tubulin family. Gamma-tubulin complex is composed of gamma-tubulin and GCP proteins.

The protein resides in the cytoplasm. Its subcellular location is the cytoskeleton. It localises to the microtubule organizing center. The protein localises to the nucleus. It is found in the cell cortex. Functionally, tubulin is the major constituent of microtubules. The gamma chain is found at microtubule organizing centers (MTOC) such as the spindle poles, suggesting that it is involved in the minus-end nucleation of microtubule assembly. Its function is as follows. Gamma-tubulin complex is essential for the control of microtubular network remodeling in the course of initiation and development of giant-feeding cells, and for the successful reproduction of nematodes (e.g. Meloidogyne spp.) in their plant hosts. The protein is Tubulin gamma-1 chain (TUBG1) of Arabidopsis thaliana (Mouse-ear cress).